Reading from the N-terminus, the 429-residue chain is Adenosylmethionine-8-amino-7-oxononanoate aminotransferase (429 aa).

Tryptophan 52 is a binding site for substrate. 112-113 (GS) lines the pyridoxal 5'-phosphate pocket. Tyrosine 144 is a substrate binding site. Aspartate 245 is a binding site for pyridoxal 5'-phosphate. Residues lysine 274 and glycine 307 each coordinate substrate. Lysine 274 is subject to N6-(pyridoxal phosphate)lysine. 308–309 (PT) is a binding site for pyridoxal 5'-phosphate. Arginine 391 provides a ligand contact to substrate.

This sequence belongs to the class-III pyridoxal-phosphate-dependent aminotransferase family. BioA subfamily. Homodimer. The cofactor is pyridoxal 5'-phosphate.

The protein resides in the cytoplasm. The enzyme catalyses (8S)-8-amino-7-oxononanoate + S-adenosyl-L-methionine = S-adenosyl-4-methylsulfanyl-2-oxobutanoate + (7R,8S)-7,8-diammoniononanoate. Its pathway is cofactor biosynthesis; biotin biosynthesis; 7,8-diaminononanoate from 8-amino-7-oxononanoate (SAM route): step 1/1. In terms of biological role, catalyzes the transfer of the alpha-amino group from S-adenosyl-L-methionine (SAM) to 7-keto-8-aminopelargonic acid (KAPA) to form 7,8-diaminopelargonic acid (DAPA). It is the only aminotransferase known to utilize SAM as an amino donor. The protein is Adenosylmethionine-8-amino-7-oxononanoate aminotransferase of Buchnera aphidicola subsp. Baizongia pistaciae (strain Bp).